Consider the following 112-residue polypeptide: Elongin-C (112 aa).

Belongs to the SKP1 family. As to quaternary structure, heterotrimer of an A (ELOA, ELOA2 or ELOA3P), ELOB and ELOC subunit. The elongin BC complex interacts with EPOP; leading to recruit the elongin BC complex to Polycomb group (PcG) target genes, thereby restricting excessive activity of the PRC2/EED-EZH2 complex. Component of multiple cullin-RING E3 ubiquitin-protein ligase complexes composed of Elongin BC (ELOB and ELOC), a cullin (CUL2 or CUL5), a catalytic subunit (RBX1 or RNF7/RBX2), as well as a substrate adapter protein that can be either ASB2, ASB9, ASB11, KLHDC2, KLHDC3, KLHDC10, APPBP2, FEM1A, FEM1B, FEM1C, LRR1, PCMTD1, SOCS1, SOCS2, SOCS5, SPSB1, SPSB3, ELOA, VHL, WSB1, ZYG11B or RAB40C. Interacts with TMF1. As part of the Elongin BC E3 ubiquitin ligase complex; interacts with NRBP1. May form oligomers as a KLHDC2/KLHDC3-ELOB-ELOC complex; this interaction is autoinhibitory for the E3 ligase complex as the substrate-binding site of KLHDC2/KLHDC3 is blocked in the oligomer. Post-translationally, ubiquitinated by the DCX(AMBRA1) complex, leading to its degradation by the proteasome.

The protein localises to the nucleus. It participates in protein modification; protein ubiquitination. In terms of biological role, SIII, also known as elongin, is a general transcription elongation factor that increases the RNA polymerase II transcription elongation past template-encoded arresting sites. Subunit A is transcriptionally active and its transcription activity is strongly enhanced by binding to the dimeric complex of the SIII regulatory subunits B and C (elongin BC complex). In embryonic stem cells, the elongin BC complex is recruited by EPOP to Polycomb group (PcG) target genes in order generate genomic region that display both active and repressive chromatin properties, an important feature of pluripotent stem cells. Core component of multiple cullin-RING-based ECS (ElonginB/C-CUL2/5-SOCS-box protein) E3 ubiquitin-protein ligase complexes, which mediate the ubiquitination of target proteins. By binding to BC-box motifs it seems to link target recruitment subunits, like VHL and members of the SOCS box family, to Cullin/RBX1 modules that activate E2 ubiquitination enzymes. Component the von Hippel-Lindau ubiquitination complex CBC(VHL). A number of ECS complexes (containing either KLHDC2, KLHDC3, KLHDC10, APPBP2, FEM1A, FEM1B or FEM1C as substrate-recognition component) are part of the DesCEND (destruction via C-end degrons) pathway, which recognizes a C-degron located at the extreme C terminus of target proteins, leading to their ubiquitination and degradation. The ECS(ASB9) complex mediates ubiquitination and degradation of CKB. As part of a multisubunit ubiquitin ligase complex, polyubiquitinates monoubiquitinated POLR2A. ECS(LRR1) ubiquitinates MCM7 and promotes CMG replisome disassembly by VCP and chromatin extraction during S-phase. As part of the ECS(RAB40C) complex, mediates ANKRD28 ubiquitination and degradation, thereby inhibiting protein phosphatase 6 (PP6) complex activity and focal adhesion assembly during cell migration. The protein is Elongin-C (ELOC) of Bos taurus (Bovine).